Here is a 104-residue protein sequence, read N- to C-terminus: Defensin-2 (104 aa).

A signal peptide spans 1-19 (MKFFVLFAILIAIVHASCA). Disulfide bonds link cysteine 64-cysteine 95, cysteine 81-cysteine 100, and cysteine 85-cysteine 102.

This sequence belongs to the invertebrate defensin family. Type 1 subfamily. In terms of tissue distribution, low expression in head and thorax.

The protein resides in the secreted. Functionally, antibacterial peptide mostly active against Gram-positive bacteria. This Apis mellifera (Honeybee) protein is Defensin-2.